A 254-amino-acid polypeptide reads, in one-letter code: Receptor expression-enhancing protein 2 (254 aa).

2 helical membrane passes run 1–21 and 35–55; these read MVSWIISRLVVLIFGTLYPAY and YVKWMMYWIVFAFFTTAETLT. Ser-152 bears the Phosphoserine mark. A disordered region spans residues 194–254; it reads LSLRSSTSQP…KKSSGGGDSA (61 aa). The span at 205–219 shows a compositional bias: basic and acidic residues; sequence PRTETSEDDLGDKAP.

Belongs to the DP1 family. In terms of assembly, interacts with odorant receptor proteins.

It is found in the membrane. In terms of biological role, required for endoplasmic reticulum (ER) network formation, shaping and remodeling. May enhance the cell surface expression of odorant receptors. The sequence is that of Receptor expression-enhancing protein 2 (Reep2) from Mus musculus (Mouse).